The chain runs to 96 residues: Co-chaperonin GroES 1 (96 aa).

This sequence belongs to the GroES chaperonin family. In terms of assembly, heptamer of 7 subunits arranged in a ring. Interacts with the chaperonin GroEL.

The protein resides in the cytoplasm. Its function is as follows. Together with the chaperonin GroEL, plays an essential role in assisting protein folding. The GroEL-GroES system forms a nano-cage that allows encapsulation of the non-native substrate proteins and provides a physical environment optimized to promote and accelerate protein folding. GroES binds to the apical surface of the GroEL ring, thereby capping the opening of the GroEL channel. The chain is Co-chaperonin GroES 1 from Vibrio vulnificus (strain CMCP6).